The following is a 46-amino-acid chain: YGNTGGYTPVPDIDDIHVVEIANYAVTEYNKKSGVVAGVNYRFVLK.

The Secondary area of contact signature appears at 35 to 38 (VVAG).

Belongs to the cystatin family. Phytocystatin subfamily.

Functionally, inhibitor of papain. In Wisteria floribunda (Japanese wisteria), this protein is Cystatin WCPI-3.